We begin with the raw amino-acid sequence, 116 residues long: uncharacterized protein (116 aa).

Residues 58–78 form a helical membrane-spanning segment; that stretch reads IIVDFKFIFQIFLILSFGFFA.

It localises to the membrane. This is an uncharacterized protein from Rickettsia prowazekii (strain Madrid E).